The chain runs to 455 residues: SVGFKAGVKDYKLTYYTPDNQTKDTDILAAFRVTPQPGVPPEEAGAAVAAESSTGTWTTVWTDGLTSLDRYKGRCYHIEPVAGEENQFIAYVAYPLDLFEEGSVTNMFTSIVGNVFGFKALRALRLEDLRIPNAYVKTFQGPPHGIQVERDKLNKYGRPLLGCTIKPKLGLSAKNYGRAVYECLRGGLDFTKDDENVNSQPFMRWRDRFLFCAEALYKAQAETGEIKGHYLNATAGTCEEMIKRAVFARELGVPIVMHDYITGGFTANTSLAHYCRDNGLLLHIHRAMHAVIDRQKNHGMHFRVLAKALRLSGGDHIHSGTVVGKLEGEREITLGFVDLLRDDFVEKDRSRGIYFTQDWVSLPGVLPVASGGIHVWHMPALTEIFGDDSVLQFGGGTLGHPWGNAPGAVANRVALEACVQARNEGRDLASEGNQIIREASKWSPELAAACEVWKE.

Lys5 carries the N6,N6,N6-trimethyllysine modification. Residues Asn114 and Thr164 each coordinate substrate. The active-site Proton acceptor is the Lys166. Lys168 is a binding site for substrate. Lys192, Asp194, and Glu195 together coordinate Mg(2+). Position 192 is an N6-carboxylysine (Lys192). The active-site Proton acceptor is His285. Substrate-binding residues include Arg286, His318, and Ser370.

The protein belongs to the RuBisCO large chain family. Type I subfamily. Heterohexadecamer of 8 large chains and 8 small chains; disulfide-linked. The disulfide link is formed within the large subunit homodimers. Requires Mg(2+) as cofactor. In terms of processing, the disulfide bond which can form in the large chain dimeric partners within the hexadecamer appears to be associated with oxidative stress and protein turnover.

The protein resides in the plastid. It is found in the chloroplast. It catalyses the reaction 2 (2R)-3-phosphoglycerate + 2 H(+) = D-ribulose 1,5-bisphosphate + CO2 + H2O. The catalysed reaction is D-ribulose 1,5-bisphosphate + O2 = 2-phosphoglycolate + (2R)-3-phosphoglycerate + 2 H(+). Functionally, ruBisCO catalyzes two reactions: the carboxylation of D-ribulose 1,5-bisphosphate, the primary event in carbon dioxide fixation, as well as the oxidative fragmentation of the pentose substrate in the photorespiration process. Both reactions occur simultaneously and in competition at the same active site. This chain is Ribulose bisphosphate carboxylase large chain, found in Lupinus microcarpus (Chick lupine).